The chain runs to 883 residues: Aldehyde-alcohol dehydrogenase (883 aa).

The interval 13-456 is aldehyde dehydrogenase; it reads KLVAEKHVDE…DNVSAINLLN (444 aa). NAD(+)-binding positions include 121 to 126, Gly206, and Gly224; that span reads ITPTTN. Cys257 acts as the Nucleophile in catalysis. Residues Glu355, Leu435, and 438–443 each bind NAD(+); that span reads GSYGRN. The linker stretch occupies residues 457 to 464; sequence IKKVGRRR. NAD(+) contacts are provided by residues Asp500, Asp534, 561–565, 612–613, Val625, Lys634, and Leu653; these read GSPMD and TT. Fe cation-binding residues include Asp668, His672, His736, and His750.

In the N-terminal section; belongs to the aldehyde dehydrogenase family. This sequence in the C-terminal section; belongs to the iron-containing alcohol dehydrogenase family. Fe(2+) is required as a cofactor.

It catalyses the reaction ethanol + NAD(+) = acetaldehyde + NADH + H(+). The enzyme catalyses an aldehyde + NAD(+) + H2O = a carboxylate + NADH + 2 H(+). Its function is as follows. Has alcohol dehydrogenase activity. Has aldehyde dehydrogenase activity. May play a role in enhancing virulence in mice. May be considered a potential virulence factor. This is Aldehyde-alcohol dehydrogenase from Streptococcus pneumoniae serotype 4 (strain ATCC BAA-334 / TIGR4).